The following is a 198-amino-acid chain: Putative 3-methyladenine DNA glycosylase (198 aa).

It belongs to the DNA glycosylase MPG family.

The chain is Putative 3-methyladenine DNA glycosylase from Oceanobacillus iheyensis (strain DSM 14371 / CIP 107618 / JCM 11309 / KCTC 3954 / HTE831).